Consider the following 285-residue polypeptide: Bis(5'-nucleosyl)-tetraphosphatase, symmetrical (285 aa).

The protein belongs to the Ap4A hydrolase family.

It carries out the reaction P(1),P(4)-bis(5'-adenosyl) tetraphosphate + H2O = 2 ADP + 2 H(+). Hydrolyzes diadenosine 5',5'''-P1,P4-tetraphosphate to yield ADP. The polypeptide is Bis(5'-nucleosyl)-tetraphosphatase, symmetrical (Colwellia psychrerythraea (strain 34H / ATCC BAA-681) (Vibrio psychroerythus)).